The following is a 507-amino-acid chain: Sugar transport protein 6 (507 aa).

Residues 1–20 (MAVVVSNANAPAFEAKMTVY) lie on the Cytoplasmic side of the membrane. 12 consecutive transmembrane segments (helical) span residues 21–41 (VFICVMIAAVGGLIFGYDIGI), 78–98 (FLQLFTSSLYLAALVASFVAS), 115–135 (IFFLIGVGLTAGAVNLVMLII), 138–158 (LFLGFGVGFGNQAVPLFLSEI), 165–185 (GGLNIVFQLMVTIGILIANIV), 199–219 (IALGGAGIPAVILLFGSLLII), 280–300 (FIIGMLLQLFQQFTGINAIMF), 318–338 (LSAVITGSINVLATFVGIYLV), 345–365 (FLLLQSSVHMLICQLIIGIIL), 381–401 (LVVVIFVCVYVMGFAWSWGPL), 418–438 (GFAVAVSCNMFFTFVIAQAFL), and 447–467 (GIFFFFSGWIIVMGLFAFFFI). The Cytoplasmic portion of the chain corresponds to 468 to 507 (PETKGIAIDDMRESVWKPHWFWKRYMLPEDDHHDIEKRNA).

It belongs to the major facilitator superfamily. Sugar transporter (TC 2.A.1.1) family. Pollen specific.

The protein resides in the membrane. Its activity is regulated as follows. Inhibited by uncouplers such as 2,4-dinitrophenol and carbonyl cyanide-m-chlorophenyl-hydrazone. Mediates an active uptake of hexoses, probably by sugar/hydrogen symport. Can transport glucose, 3-O-methylglucose, mannose, fructose and galactose, and, to a lower extent, xylose and ribulose. The sequence is that of Sugar transport protein 6 (STP6) from Arabidopsis thaliana (Mouse-ear cress).